We begin with the raw amino-acid sequence, 944 residues long: Valine--tRNA ligase (944 aa).

The 'HIGH' region motif lies at 43 to 53; it reads PNVTGTLHMGH. The short motif at 550-554 is the 'KMSKS' region element; that stretch reads KMSKS. Lys553 contributes to the ATP binding site. A coiled-coil region spans residues 878–944; it reads LVDMDAERTR…TGLREQRAKL (67 aa).

This sequence belongs to the class-I aminoacyl-tRNA synthetase family. ValS type 1 subfamily. As to quaternary structure, monomer.

It localises to the cytoplasm. The enzyme catalyses tRNA(Val) + L-valine + ATP = L-valyl-tRNA(Val) + AMP + diphosphate. Catalyzes the attachment of valine to tRNA(Val). As ValRS can inadvertently accommodate and process structurally similar amino acids such as threonine, to avoid such errors, it has a 'posttransfer' editing activity that hydrolyzes mischarged Thr-tRNA(Val) in a tRNA-dependent manner. This chain is Valine--tRNA ligase, found in Xanthomonas campestris pv. campestris (strain B100).